Consider the following 113-residue polypeptide: Ig heavy chain V region 36-60 (113 aa).

The chain is Ig heavy chain V region 36-60 from Mus musculus (Mouse).